Reading from the N-terminus, the 379-residue chain is tRNA-specific 2-thiouridylase MnmA (379 aa).

Residues 9–16 and Met35 each bind ATP; that span reads AMSGGVDS. The segment at 94–96 is interaction with target base in tRNA; it reads NPD. Cys99 acts as the Nucleophile in catalysis. Cys99 and Cys195 are oxidised to a cystine. Gly123 is a binding site for ATP. Residues 145–147 are interaction with tRNA; the sequence is KDQ. The active-site Cysteine persulfide intermediate is the Cys195. The segment at 307–308 is interaction with tRNA; sequence RY.

The protein belongs to the MnmA/TRMU family.

It is found in the cytoplasm. It catalyses the reaction S-sulfanyl-L-cysteinyl-[protein] + uridine(34) in tRNA + AH2 + ATP = 2-thiouridine(34) in tRNA + L-cysteinyl-[protein] + A + AMP + diphosphate + H(+). Catalyzes the 2-thiolation of uridine at the wobble position (U34) of tRNA, leading to the formation of s(2)U34. The sequence is that of tRNA-specific 2-thiouridylase MnmA from Xylella fastidiosa (strain M12).